We begin with the raw amino-acid sequence, 86 residues long: Toxin TdNa7 (86 aa).

The signal sequence occupies residues 1–20 (MTRFVLFLSCFFLIGMVVEC). Residues 21–83 (KDGYLMGPDG…TWERATNTCG (63 aa)) form the LCN-type CS-alpha/beta domain. Intrachain disulfides connect cysteine 31–cysteine 82, cysteine 35–cysteine 57, cysteine 43–cysteine 63, and cysteine 47–cysteine 65. Lysine 84 bears the Lysine amide mark.

The protein belongs to the long (4 C-C) scorpion toxin superfamily. Sodium channel inhibitor family. Beta subfamily. As to expression, expressed by the venom gland.

Its subcellular location is the secreted. Functionally, beta toxins bind voltage-independently at site-4 of sodium channels (Nav) and shift the voltage of activation toward more negative potentials thereby affecting sodium channel activation and promoting spontaneous and repetitive firing. In Tityus discrepans (Venezuelan scorpion), this protein is Toxin TdNa7.